Reading from the N-terminus, the 650-residue chain is Chaperone protein DnaK (650 aa).

Threonine 200 carries the phosphothreonine; by autocatalysis modification.

Belongs to the heat shock protein 70 family.

Its function is as follows. Acts as a chaperone. The sequence is that of Chaperone protein DnaK from Burkholderia orbicola (strain MC0-3).